The primary structure comprises 1069 residues: Epstein-Barr nuclear antigen 6 (1069 aa).

5 disordered regions span residues 1–75 (MESF…RIRR), 353–708 (MLAT…PCQS), 733–776 (SSMS…LYPG), 884–932 (REPR…PPRL), and 1008–1069 (PLDI…SELD). The segment covering 50-67 (PDSRDQQSRGQRRGDENR) has biased composition (basic and acidic residues). Composition is skewed to acidic residues over residues 381–391 (VELESSDDELP) and 507–524 (YDDDIIEVIDVETTEEET). Residues 543–561 (STGSAMSSSHTDPSVTQPS) show a composition bias toward polar residues. Residues 689 to 708 (QQEPSSQQQPATQSTPPCQS) show a composition bias toward low complexity. Basic and acidic residues predominate over residues 742 to 751 (SHEEQPRYED). Positions 1032 to 1048 (SQATSEAQEILSDNSEI) are enriched in polar residues.

This sequence belongs to the herpesviridae EBNA-6 family. As to quaternary structure, interacts with host CTPB1; this interaction leads to gene repression, but also seems to interfere with the repressive function of CtBP pre-bound to DNA, leading to EBNA6 mediated up-regulation of many host genes. Interacts with host MYC; this interaction enhances MYC stability. Interacts (via N-terminus) with host RBPJ. Interacts (via N-terminus) with host histone H2AX; this interaction facilitates H2AX proteasomal degradation. Interacts with host TP73; this interaction inhibits TP73-mediated apoptotic pathway. Interacts (via N-terminus) with host PIM1; this interaction upregulates and stabilizes PIM1 and induces cell proliferation by inhibiting the growth suppressive properties of p21.

The protein localises to the host nucleus. It localises to the host nucleus matrix. Plays an essential role for the activation and immortalization of human B-cells. Represses transcription of viral promoters TP1 and Cp through interaction with host RBPJ, and inhibits EBNA2-mediated activation of these promoters. Targets host chromatin through interactions with host transcription factors, especially RBPJ and IRF4. Alternatively, EBNA6 also regulates the transcription of the EBV oncogene LMP1 in a cell cycle-dependent manner. Modulates the activity of several host proteins involved in cell cycle regulation including host cyclin A, MYC, RB, p21 and p27 mainly through binding to the host SCF(SKP2) complex. Inhibits the promoter of host H2AX and targets H2AX to proteasomal degradation in order to promote latency and cell proliferation. Upregulates host PIM1 expression and stabilization. Potentiates PIM1 to promote cell proliferation by inhibiting the growth suppressive properties of p21. In Epstein-Barr virus (strain AG876) (HHV-4), this protein is Epstein-Barr nuclear antigen 6 (EBNA6).